We begin with the raw amino-acid sequence, 617 residues long: Electron transfer flavoprotein-ubiquinone oxidoreductase, mitochondrial (617 aa).

The transit peptide at 1–33 (MLVPLAKLSCLAYQCFHALKIKKNYLPLCATRW) directs the protein to the mitochondrion. 71-85 (VVIVGAGPAGLSAAV) contributes to the FAD binding site. N6-acetyllysine is present on K96. Residues 109–130 (IGAHTLSGACLDPGAFKELFPD) lie within the membrane without spanning it. Residues K132 and K223 each carry the N6-acetyllysine modification. A ubiquinone contacts are provided by G305 and G306. Position 357 is an N6-acetyllysine (K357). The stretch at 428 to 447 (IGLHVTEYEDNLKNSWVWKE) is an intramembrane region. Phosphoserine is present on S551. C561, C586, C589, and C592 together coordinate [4Fe-4S] cluster. A 4Fe-4S ferredoxin-type domain is found at 577–606 (FRLQINAQNCVHCKTCDIKDPSQNINWVVP).

The protein belongs to the ETF-QO/FixC family. Monomer. The cofactor is [4Fe-4S] cluster. It depends on FAD as a cofactor.

The protein localises to the mitochondrion inner membrane. The catalysed reaction is a ubiquinone + reduced [electron-transfer flavoprotein] = a ubiquinol + oxidized [electron-transfer flavoprotein] + H(+). Its function is as follows. Accepts electrons from ETF and reduces ubiquinone. This chain is Electron transfer flavoprotein-ubiquinone oxidoreductase, mitochondrial, found in Homo sapiens (Human).